A 187-amino-acid polypeptide reads, in one-letter code: Elongation factor P (187 aa).

It belongs to the elongation factor P family.

It is found in the cytoplasm. It functions in the pathway protein biosynthesis; polypeptide chain elongation. In terms of biological role, involved in peptide bond synthesis. Stimulates efficient translation and peptide-bond synthesis on native or reconstituted 70S ribosomes in vitro. Probably functions indirectly by altering the affinity of the ribosome for aminoacyl-tRNA, thus increasing their reactivity as acceptors for peptidyl transferase. In Bifidobacterium animalis subsp. lactis (strain AD011), this protein is Elongation factor P.